Reading from the N-terminus, the 67-residue chain is Large ribosomal subunit protein uL29c (67 aa).

The protein belongs to the universal ribosomal protein uL29 family.

The protein resides in the plastid. The protein localises to the chloroplast. In Porphyra purpurea (Red seaweed), this protein is Large ribosomal subunit protein uL29c (rpl29).